Here is a 467-residue protein sequence, read N- to C-terminus: Pachytene checkpoint protein 2 homolog (467 aa).

209 to 216 (GPPGTGKT) provides a ligand contact to ATP.

The protein belongs to the AAA ATPase family. PCH2 subfamily.

Its subcellular location is the chromosome. Plays a key role in chromosome recombination during meiosis. Mediates meiotic chromosome remodeling and crossover maturation. This chain is Pachytene checkpoint protein 2 homolog, found in Arabidopsis thaliana (Mouse-ear cress).